We begin with the raw amino-acid sequence, 396 residues long: Metallophosphoesterase 1 (396 aa).

A helical transmembrane segment spans residues threonine 28 to phenylalanine 48. A divalent metal cation contacts are provided by aspartate 75, aspartate 117, asparagine 155, histidine 249, histidine 303, and histidine 305. A helical membrane pass occupies residues threonine 356–phenylalanine 376.

The protein belongs to the metallophosphoesterase superfamily. MPPE1 family. Interacts with GPI-anchor proteins (via the GPI portion). Interacts with TMED10. Mn(2+) serves as cofactor.

The protein resides in the endoplasmic reticulum-Golgi intermediate compartment membrane. In terms of biological role, metallophosphoesterase that catalyzes the removal of a side-chain ethanolamine-phosphate (EtNP) from the second mannose of the GPI-anchor protein intermediate. Participates in the glycan remodeling steps of GPI-anchor maturation to allow an efficient transport of GPI-anchor proteins from the endoplasmic reticulum to the Golgi. The protein is Metallophosphoesterase 1 of Mus musculus (Mouse).